A 1325-amino-acid polypeptide reads, in one-letter code: Clustered mitochondria protein homolog (1325 aa).

Residues Pro311 to Leu573 form the Clu domain. Disordered stretches follow at residues Lys893–Thr937, Asp1032–Leu1063, and Gln1245–Ser1325. The span at Ser1265–His1275 shows a compositional bias: basic residues. Low complexity predominate over residues Gln1276–Pro1285. Basic residues predominate over residues Ala1314–Ser1325.

The protein belongs to the CLU family. As to quaternary structure, may associate with the eukaryotic translation initiation factor 3 (eIF-3) complex.

It is found in the cytoplasm. In terms of biological role, mRNA-binding protein involved in proper cytoplasmic distribution of mitochondria. The polypeptide is Clustered mitochondria protein homolog (Malassezia globosa (strain ATCC MYA-4612 / CBS 7966) (Dandruff-associated fungus)).